The following is a 430-amino-acid chain: Histidine--tRNA ligase (430 aa).

Belongs to the class-II aminoacyl-tRNA synthetase family. Homodimer.

Its subcellular location is the cytoplasm. It carries out the reaction tRNA(His) + L-histidine + ATP = L-histidyl-tRNA(His) + AMP + diphosphate + H(+). This chain is Histidine--tRNA ligase, found in Chlamydia felis (strain Fe/C-56) (Chlamydophila felis).